The sequence spans 148 residues: Glycine cleavage system H protein 5 (148 aa).

Residues V33–K115 form the Lipoyl-binding domain. N6-lipoyllysine is present on K74.

The protein belongs to the GcvH family. In terms of assembly, the glycine cleavage system is composed of four proteins: P, T, L and H. The cofactor is (R)-lipoate.

Its function is as follows. The glycine cleavage system catalyzes the degradation of glycine. The H protein shuttles the methylamine group of glycine from the P protein to the T protein. This is Glycine cleavage system H protein 5 from Aquifex aeolicus (strain VF5).